A 491-amino-acid chain; its full sequence is 3-phosphoinositide-dependent protein kinase 1 (491 aa).

A Protein kinase domain is found at Phe44 to Phe311. ATP-binding positions include Ser54–Ser56 and Lys73. The interval Met75–Met119 is PIF-pocket. The interval Lys77–Gln112 is PIF-binding. Residues Glu122–Cys124 and Glu128 each bind ATP. Asp167 functions as the Proton acceptor in the catalytic mechanism. Glu171 is an ATP binding site. Ser177 is subject to Phosphoserine. Residue Asp185 participates in ATP binding. The segment at Asp185 to Glu222 is activation loop. Thr211 is subject to Phosphothreonine; by autocatalysis. A phosphoserine mark is found at Ser276 and Ser337. The tract at residues Ser321–Ile377 is disordered. The span at Ser365 to Ser376 shows a compositional bias: low complexity. Phosphoserine is present on Ser382. One can recognise a PH domain in the interval Phe386–Arg491.

This sequence belongs to the protein kinase superfamily. AGC Ser/Thr protein kinase family. PDPK1 subfamily. As to quaternary structure, interacts with AGC1-5 and AGC1-7. Interacts with the C-terminal PIF domain of the protein kinases D6PK/AGC1-1, OXI1/AGC2-1 and PID. Phosphorylation on Thr-211 in the activation loop is required for full activity. PDK1 itself can autophosphorylate Thr-211, leading to its own activation. As to expression, ubiquitous.

It localises to the cytoplasm. The protein localises to the membrane. The catalysed reaction is L-seryl-[protein] + ATP = O-phospho-L-seryl-[protein] + ADP + H(+). It carries out the reaction L-threonyl-[protein] + ATP = O-phospho-L-threonyl-[protein] + ADP + H(+). Activated by phosphatidic acid (PA) and in response to the fungal elicitor xylanase. Its function is as follows. May couple lipid signals to the activation-loop phosphorylation of several protein kinases of the so-called AGC kinase family. Interacts via its pleckstrin homology domain with phosphatidic acid, PtdIns3P and PtdIns(3,4)P2 and to a lesser extent with PtdIns(4,5)P2 and PtdIns4P. May play a general role in signaling processes controlling the pathogen/stress response, polar auxin transport and development. Transphosphorylates the AGC protein kinases OXI1/AGC2-1, PK1/S6K1, PK19/S6K2 and PID resulting in their activation. This Arabidopsis thaliana (Mouse-ear cress) protein is 3-phosphoinositide-dependent protein kinase 1 (PDPK1).